The chain runs to 692 residues: Ribonuclease J (692 aa).

The tract at residues methionine 1–asparagine 91 is disordered. The segment covering glutamate 9–arginine 25 has biased composition (basic and acidic residues). The span at histidine 57–glutamine 79 shows a compositional bias: basic residues. N6-acetyllysine is present on residues lysine 135 and lysine 141. Residues histidine 209, histidine 211, aspartate 213, histidine 214, histidine 278, and aspartate 300 each contribute to the Zn(2+) site. 3 positions are modified to N6-acetyllysine: lysine 324, lysine 338, and lysine 398. Residue histidine 501–histidine 505 coordinates substrate. Lysine 512 bears the N6-acetyllysine mark. Position 527 (histidine 527) interacts with Zn(2+). Residues lysine 548, lysine 635, and lysine 650 each carry the N6-acetyllysine modification.

This sequence belongs to the metallo-beta-lactamase superfamily. RNA-metabolizing metallo-beta-lactamase-like family. Bacterial RNase J subfamily. Homodimer. Homotetramer; dimer of homodimers. Interacts with RNA helicase RhpA, might be a member of a minimal RNA degradosome complex. It depends on Zn(2+) as a cofactor. In terms of processing, acetylated on nine lysine residues. Some of the residues are acetylated by multiple different mechanisms. RimL is partially responsible for the acetylation of Lys-324, Lys-398 and Lys-650. HPB8_1270 homolog is partially responsible for the acetylation of Lys-324, Lys-398, Lys-512 and Lys-650. Acetyl-phosphate-mediated non-enzymatic acetylation pathway takes part in the acetylation of Lys-135, Lys-324, Lys-398, Lys-512 and Lys-650. Acetylation of the remaining residues Lys-141, Lys-338, Lys-548 and Lys-635 occurs by a yet undetermined mechanism. Acetylation on a number of these residues is important for growth regulation and proper cell morphology.

The protein resides in the cytoplasm. Catalytic activity is regulated by the balance between homodimers and homotetramers, with homotetramers being the active forms of this enzyme. Acetylation allosterically regulates the homooligomerization state and hence the catalytic activity. Its function is as follows. An RNase that has 5'-3' exoribonuclease and endoribonuclease activity. Degrades 5'-monophosphorylated ssRNA and dsRNA, considerably more active on ssRNA. Association with RhpA significantly increases the dsRNase activity. Degrades RNA substrate with hairpin structures at both ends with low activity, but presence of RhpA significantly increases the activity on this substrate. Stimulates ATPase activity of RNA helicase RhpA. Involved in stabilization of mRNA but apparently not rRNA. The polypeptide is Ribonuclease J (Helicobacter pylori (strain J99 / ATCC 700824) (Campylobacter pylori J99)).